The chain runs to 505 residues: MSLIINTFYSNKEIFLQELISNASDALDKIRYESLTDPSKLDGGKELKIDIIPNPRECILTLVNTGIGMTKADLINNLGAIAKSGTEAFMEAFQSCAEISMIGQFGVGFYSAYLVAEKVAITKHNDEEQYSWVSSAGSSFTLHVDHGEPIDRDTKVILHLKEDQTEYLEERWVKEVVKKHPQFIGCLIAVYLEKEPEKEISDDEEEKGEKEEEDKDDKEKPKTEDVGSDEEDDTDKNNKKKTKKIKEKYTDREELNQTKPIWTRNPDDITQEECGEFYKSLTSAWEDHLAVKQFPVEEQEENEQLCVHHVWIMDSFDDLMPEYVGFVREDKENNKKLDEVFSKISWLGIHEDSINWRHLSELLWSHTFQSGDEMTSLSEYVSCMKEAQKSICDIIGECKEQVANSAFVEQEWKKGFEVIYMSEPIDEYCVQQLKEFDGKSLLSVTKEGLELPEDEEEKKIMEESNVKFENLCRLMKEILDKKVERVTISSRLVSSPCRIVTSTYS.

Residues asparagine 22, lysine 83, and phenylalanine 109 each contribute to the ATP site. The interval 197-248 (EKEISDDEEEKGEKEEEDKDDKEKPKTEDVGSDEEDDTDKNNKKKTKKIKEK) is disordered. Positions 200 to 216 (ISDDEEEKGEKEEEDKD) are enriched in acidic residues.

The protein belongs to the heat shock protein 90 family. As to quaternary structure, homodimer.

The protein localises to the cytoplasm. In terms of biological role, putative molecular chaperone that may promote the maturation, structural maintenance and proper regulation of specific target proteins. The protein is Putative heat shock protein HSP 90-beta 4 (HSP90AB4P) of Homo sapiens (Human).